Here is a 1343-residue protein sequence, read N- to C-terminus: DNA-directed RNA polymerase subunit beta (1343 aa).

The protein belongs to the RNA polymerase beta chain family. In terms of assembly, the RNAP catalytic core consists of 2 alpha, 1 beta, 1 beta' and 1 omega subunit. When a sigma factor is associated with the core the holoenzyme is formed, which can initiate transcription.

It catalyses the reaction RNA(n) + a ribonucleoside 5'-triphosphate = RNA(n+1) + diphosphate. In terms of biological role, DNA-dependent RNA polymerase catalyzes the transcription of DNA into RNA using the four ribonucleoside triphosphates as substrates. The sequence is that of DNA-directed RNA polymerase subunit beta from Shewanella denitrificans (strain OS217 / ATCC BAA-1090 / DSM 15013).